The following is a 203-amino-acid chain: Pyridoxal 5'-phosphate synthase subunit PdxT (203 aa).

54–56 (GES) is an L-glutamine binding site. Cys86 serves as the catalytic Nucleophile. L-glutamine is bound by residues Arg113 and 141–142 (IR). Residues His177 and Glu179 each act as charge relay system in the active site.

It belongs to the glutaminase PdxT/SNO family. In terms of assembly, in the presence of PdxS, forms a dodecamer of heterodimers. Only shows activity in the heterodimer.

It catalyses the reaction aldehydo-D-ribose 5-phosphate + D-glyceraldehyde 3-phosphate + L-glutamine = pyridoxal 5'-phosphate + L-glutamate + phosphate + 3 H2O + H(+). The enzyme catalyses L-glutamine + H2O = L-glutamate + NH4(+). It functions in the pathway cofactor biosynthesis; pyridoxal 5'-phosphate biosynthesis. In terms of biological role, catalyzes the hydrolysis of glutamine to glutamate and ammonia as part of the biosynthesis of pyridoxal 5'-phosphate. The resulting ammonia molecule is channeled to the active site of PdxS. The protein is Pyridoxal 5'-phosphate synthase subunit PdxT of Halobacterium salinarum (strain ATCC 29341 / DSM 671 / R1).